A 66-amino-acid polypeptide reads, in one-letter code: Large ribosomal subunit protein bL35 (66 aa).

Residues 1–26 (MPKMKTHRGAAKRFKKTGTGKLKRGH) show a composition bias toward basic residues. The interval 1-48 (MPKMKTHRGAAKRFKKTGTGKLKRGHAYTSHLFANKTQKQKRKLRKAT) is disordered.

This sequence belongs to the bacterial ribosomal protein bL35 family.

This is Large ribosomal subunit protein bL35 from Geobacillus sp. (strain WCH70).